A 133-amino-acid polypeptide reads, in one-letter code: Ribonuclease P protein component (133 aa).

This sequence belongs to the RnpA family. In terms of assembly, consists of a catalytic RNA component (M1 or rnpB) and a protein subunit.

It catalyses the reaction Endonucleolytic cleavage of RNA, removing 5'-extranucleotides from tRNA precursor.. In terms of biological role, RNaseP catalyzes the removal of the 5'-leader sequence from pre-tRNA to produce the mature 5'-terminus. It can also cleave other RNA substrates such as 4.5S RNA. The protein component plays an auxiliary but essential role in vivo by binding to the 5'-leader sequence and broadening the substrate specificity of the ribozyme. In Paramagnetospirillum magneticum (strain ATCC 700264 / AMB-1) (Magnetospirillum magneticum), this protein is Ribonuclease P protein component.